The following is a 525-amino-acid chain: Adenosine deaminase AGSA (525 aa).

The signal sequence occupies residues 1 to 25 (MSSFSTHNFVAIATFVCWFCCLATA). Asparagine 81 is a glycosylation site (N-linked (GlcNAc...) asparagine). Positions 117 and 119 each coordinate Zn(2+). Position 120 (aspartate 120) interacts with substrate. Residue asparagine 132 is glycosylated (N-linked (GlcNAc...) asparagine). The cysteines at positions 142 and 163 are disulfide-linked. Asparagine 188 carries N-linked (GlcNAc...) asparagine glycosylation. Substrate is bound by residues 207–214 (WVRFNKYF) and glycine 329. An N-linked (GlcNAc...) asparagine glycan is attached at asparagine 334. Histidine 361 contacts Zn(2+). The active-site Proton donor is glutamate 364. Histidine 389 serves as the catalytic Proton acceptor. Position 446 (aspartate 446) interacts with Zn(2+). Aspartate 447 serves as a coordination point for substrate.

The protein belongs to the metallo-dependent hydrolases superfamily. Adenosine and AMP deaminases family. ADGF subfamily. Zn(2+) is required as a cofactor. Detected in egg cordons and in the developing central nervous system. Not detected in adult central nervous system (at protein level). Atrial gland.

Its subcellular location is the secreted. It carries out the reaction adenosine + H2O + H(+) = inosine + NH4(+). Functionally, adenosine deaminase that may contribute to the degradation of extracellular adenosine, a signaling molecule that controls a variety of cellular responses. May play a role in the regulation of cell proliferation. This Aplysia californica (California sea hare) protein is Adenosine deaminase AGSA.